Reading from the N-terminus, the 205-residue chain is Isochorismatase domain-containing protein 2 (205 aa).

Phosphoserine is present on residues S7 and S202.

This sequence belongs to the isochorismatase family. Interacts with CDKN2A.

It localises to the cytoplasm. The protein localises to the nucleus. The sequence is that of Isochorismatase domain-containing protein 2 (ISOC2) from Homo sapiens (Human).